The sequence spans 200 residues: Small ribosomal subunit protein eS8B (200 aa).

Residues 1-41 (MGITRDSRHKRSATGAKRAQYRKKRKFELGRQPSNTRIGPK) form a disordered region. Residues serine 62 and serine 99 each carry the phosphoserine modification. Residues 124–145 (KGKKATATPTPKSKHVQRKHSA) are disordered. A compositionally biased stretch (basic residues) spans 135–145 (KSKHVQRKHSA). Residues serine 150, serine 154, and serine 171 each carry the phosphoserine modification.

It belongs to the eukaryotic ribosomal protein eS8 family. In terms of assembly, component of the small ribosomal subunit (SSU). Mature yeast ribosomes consist of a small (40S) and a large (60S) subunit. The 40S small subunit contains 1 molecule of ribosomal RNA (18S rRNA) and at least 33 different proteins. The large 60S subunit contains 3 rRNA molecules (25S, 5.8S and 5S rRNA) and at least 46 different proteins.

Its subcellular location is the cytoplasm. Its function is as follows. Component of the ribosome, a large ribonucleoprotein complex responsible for the synthesis of proteins in the cell. The small ribosomal subunit (SSU) binds messenger RNAs (mRNAs) and translates the encoded message by selecting cognate aminoacyl-transfer RNA (tRNA) molecules. The large subunit (LSU) contains the ribosomal catalytic site termed the peptidyl transferase center (PTC), which catalyzes the formation of peptide bonds, thereby polymerizing the amino acids delivered by tRNAs into a polypeptide chain. The nascent polypeptides leave the ribosome through a tunnel in the LSU and interact with protein factors that function in enzymatic processing, targeting, and the membrane insertion of nascent chains at the exit of the ribosomal tunnel. In Schizosaccharomyces pombe (strain 972 / ATCC 24843) (Fission yeast), this protein is Small ribosomal subunit protein eS8B (rps802).